Consider the following 209-residue polypeptide: MSTGLQLLGTTLGTLGWLGIIISCAIPLWRVTAFIGNNIVTAQTMWEGLWMSCVVQSTGQMQCKVYDSMLALAQDLQASRAILVISAIVGLIAMFASFAGGKCTNCLADNSAKALVATTGGVAFIIAGILGLVPPSWTANTIIRDFYNPLVAEAQKREFGAAIFICWGAAVLLVIGGGLLCSSYPKGRTSSRGRYTPASQNGRERSEYV.

Helical transmembrane passes span 8-28, 81-101, 114-134, and 159-179; these read LGTTLGTLGWLGIIISCAIPL, AILVISAIVGLIAMFASFAGG, ALVATTGGVAFIIAGILGLVP, and FGAAIFICWGAAVLLVIGGGL. Residues 187–209 are disordered; sequence GRTSSRGRYTPASQNGRERSEYV. The span at 188–201 shows a compositional bias: polar residues; it reads RTSSRGRYTPASQN.

It belongs to the claudin family.

Its subcellular location is the cell membrane. The protein resides in the cell junction. The protein localises to the tight junction. Its function is as follows. Component of tight junction (TJ) strands. This chain is Claudin-like protein ZF-A9 (cldng), found in Danio rerio (Zebrafish).